Consider the following 440-residue polypeptide: Probable cytosolic iron-sulfur protein assembly protein 1 (440 aa).

WD repeat units lie at residues 12–51 (AHAE…SSDG), 71–110 (DHKR…SDDE), 148–187 (GHES…DFEC), 193–233 (EHSQ…WCIF), 278–317 (EEDE…PDSA), 326–379 (AHSR…SPSS), and 401–440 (HGVN…VVRD). Residues 107-116 (SDDEEEEDEG) show a composition bias toward acidic residues. A disordered region spans residues 107 to 137 (SDDEEEEDEGAQGVYKPAGVDSDGDGDGGKE).

It belongs to the WD repeat CIA1 family.

Its function is as follows. Essential component of the cytosolic iron-sulfur (Fe/S) protein assembly machinery. Required for the maturation of extramitochondrial Fe/S proteins. The polypeptide is Probable cytosolic iron-sulfur protein assembly protein 1 (Cryptococcus neoformans var. neoformans serotype D (strain B-3501A) (Filobasidiella neoformans)).